The following is a 247-amino-acid chain: tRNA pseudouridine synthase A 1 (247 aa).

Asp-53 acts as the Nucleophile in catalysis. Substrate is bound at residue Tyr-111.

The protein belongs to the tRNA pseudouridine synthase TruA family. Homodimer.

It catalyses the reaction uridine(38/39/40) in tRNA = pseudouridine(38/39/40) in tRNA. Its function is as follows. Formation of pseudouridine at positions 38, 39 and 40 in the anticodon stem and loop of transfer RNAs. The polypeptide is tRNA pseudouridine synthase A 1 (Bacillus cereus (strain ATCC 14579 / DSM 31 / CCUG 7414 / JCM 2152 / NBRC 15305 / NCIMB 9373 / NCTC 2599 / NRRL B-3711)).